The chain runs to 144 residues: MSATEPHTDQPRTLADLCKVCNIPMHSLQLPCAFCKKTVCTAEIYAFQYKDLFVVWRHGFPHAACALCLELHGQINYRRHRDRACLWETVEQECGKPLEEIFIRCWLCHKPLCNVEKQRHVDYNRRFHCVRGYWKGRCLHCWKP.

2 zinc fingers span residues Cys32–Cys68 and Cys105–Cys141.

The protein belongs to the papillomaviridae E6 protein family. As to quaternary structure, forms homodimers. Interacts with ubiquitin-protein ligase UBE3A/E6-AP; this interaction stimulates UBE3A ubiquitin activity. Interacts with host TP53 and EP300; this interaction inhibits TP53 activity.

The protein resides in the host cytoplasm. Its subcellular location is the host nucleus. In terms of biological role, plays a major role in the induction and maintenance of cellular transformation. E6 associates with host UBE3A/E6-AP ubiquitin-protein ligase and modulates its activity. Sequesters tumor suppressor TP53 in the host cytoplasm and modulates its activity by interacting with host EP300 that results in the reduction of TP53 acetylation and activation. In turn, apoptosis induced by DNA damage is inhibited. E6 also protects host keratinocytes from apoptosis by mediating the degradation of host BAK1. May also inhibit host immune response. The polypeptide is Protein E6 (Homo sapiens (Human)).